The chain runs to 131 residues: UPF0102 protein YraN (131 aa).

Residues 1–19 are compositionally biased toward polar residues; sequence MATVPTRSGSPRQLTTKQT. Residues 1-20 form a disordered region; that stretch reads MATVPTRSGSPRQLTTKQTG.

It belongs to the UPF0102 family.

The chain is UPF0102 protein YraN from Escherichia coli (strain 55989 / EAEC).